The following is a 106-amino-acid chain: MQEDDICPVCGLPKELCVCEEVSKETVEKIKIYTEQVRPGKVVTIIEGLDDAGIDLQELASKLKRECACGGTAKEGKIILQGDHRNKVREFLIKKEGFSEDAIEVT.

It belongs to the SUI1 family.

This Methanopyrus kandleri (strain AV19 / DSM 6324 / JCM 9639 / NBRC 100938) protein is Protein translation factor SUI1 homolog.